Consider the following 414-residue polypeptide: Secernin-1 (414 aa).

Belongs to the peptidase C69 family. Secernin subfamily.

Its subcellular location is the cytoplasm. Regulates exocytosis in mast cells. Increases both the extent of secretion and the sensitivity of mast cells to stimulation with calcium. In Rattus norvegicus (Rat), this protein is Secernin-1 (Scrn1).